A 212-amino-acid chain; its full sequence is MFEQHKLSLQNLSCQRGERVLFRALTCDFNSGDFVQIEGHNGIGKTSLLRILAGLVRPLEGEVRWDSEAISKQREQYHQNLLYLGHLSGVKPELTAWENLQFYQRISQAEQNTDMLWDLLEKVGLLGREDLPAAQLSAGQQKRIALGRLWLSQAPLWILDEPFTAIDKKGVEILTALFDEHAQRGGIVLLTSHQEVPSSHLQKLNLAAYKAE.

Residues 7 to 209 form the ABC transporter domain; sequence LSLQNLSCQR…HLQKLNLAAY (203 aa). 39–46 lines the ATP pocket; that stretch reads GHNGIGKT.

It belongs to the ABC transporter superfamily. CcmA exporter (TC 3.A.1.107) family. In terms of assembly, the complex is composed of two ATP-binding proteins (CcmA) and two transmembrane proteins (CcmB).

The protein localises to the cell inner membrane. It carries out the reaction heme b(in) + ATP + H2O = heme b(out) + ADP + phosphate + H(+). In terms of biological role, part of the ABC transporter complex CcmAB involved in the biogenesis of c-type cytochromes; once thought to export heme, this seems not to be the case, but its exact role is uncertain. Responsible for energy coupling to the transport system. The sequence is that of Cytochrome c biogenesis ATP-binding export protein CcmA from Haemophilus influenzae (strain ATCC 51907 / DSM 11121 / KW20 / Rd).